A 773-amino-acid chain; its full sequence is DNA polymerase (773 aa).

Intrachain disulfides connect C428-C442 and C506-C509.

The protein belongs to the DNA polymerase type-B family.

It carries out the reaction DNA(n) + a 2'-deoxyribonucleoside 5'-triphosphate = DNA(n+1) + diphosphate. In terms of biological role, in addition to polymerase activity, this DNA polymerase exhibits 3' to 5' exonuclease activity. The protein is DNA polymerase (pol) of Thermococcus gorgonarius.